A 986-amino-acid polypeptide reads, in one-letter code: DNA polymerase (986 aa).

Disordered regions lie at residues 804 to 824 (DNPG…SPKR) and 944 to 969 (RKRD…SEND). A compositionally biased stretch (acidic residues) spans 948–968 (DDDDNNDDDDDDGCDSSDSEN).

This sequence belongs to the DNA polymerase type-B family.

The enzyme catalyses DNA(n) + a 2'-deoxyribonucleoside 5'-triphosphate = DNA(n+1) + diphosphate. In terms of biological role, replicates the viral genome, host DNA polymerases cannot substitute for the viral enzyme in this process. This Bombyx mori (Silk moth) protein is DNA polymerase (POL).